We begin with the raw amino-acid sequence, 156 residues long: Small ribosomal subunit protein uS7 (156 aa).

This sequence belongs to the universal ribosomal protein uS7 family. As to quaternary structure, part of the 30S ribosomal subunit. Contacts proteins S9 and S11.

In terms of biological role, one of the primary rRNA binding proteins, it binds directly to 16S rRNA where it nucleates assembly of the head domain of the 30S subunit. Is located at the subunit interface close to the decoding center, probably blocks exit of the E-site tRNA. The sequence is that of Small ribosomal subunit protein uS7 from Synechococcus elongatus (strain ATCC 33912 / PCC 7942 / FACHB-805) (Anacystis nidulans R2).